Here is a 457-residue protein sequence, read N- to C-terminus: Exodeoxyribonuclease 7 large subunit (457 aa).

Belongs to the XseA family. Heterooligomer composed of large and small subunits.

The protein localises to the cytoplasm. It catalyses the reaction Exonucleolytic cleavage in either 5'- to 3'- or 3'- to 5'-direction to yield nucleoside 5'-phosphates.. In terms of biological role, bidirectionally degrades single-stranded DNA into large acid-insoluble oligonucleotides, which are then degraded further into small acid-soluble oligonucleotides. The sequence is that of Exodeoxyribonuclease 7 large subunit from Cronobacter sakazakii (strain ATCC BAA-894) (Enterobacter sakazakii).